The chain runs to 427 residues: Probable transcription factor At5g28040 (427 aa).

The interval 1-81 (MASDQRDTDF…APATKSSSGT (81 aa)) is disordered. The residue at position 14 (Ser-14) is a Phosphoserine. Over residues 22-32 (GGGGGGRGGGE) the composition is skewed to gly residues. The segment covering 33–62 (TESDEDVVIPEPNEAEDDDHDPDPDPEYED) has biased composition (acidic residues).

Belongs to the GeBP family.

The protein is Probable transcription factor At5g28040 of Arabidopsis thaliana (Mouse-ear cress).